Here is a 690-residue protein sequence, read N- to C-terminus: Proprotein convertase subtilisin/kexin type 9 (690 aa).

Residues 1 to 28 (MGTVRSRRLWWPLPLLLLLLLGPAGARA) form the signal peptide. The propeptide occupies 29 to 150 (QEDDDGDYEE…IEEDSYVFAQ (122 aa)). Sulfotyrosine is present on Y36. At S45 the chain carries Phosphoserine. The 73-residue stretch at 75–147 (TYVVVLKEET…VDYIEEDSYV (73 aa)) folds into the Inhibitor I9 domain. The Peptidase S8 domain occupies 153–459 (PWNLERITPA…GWQLFCRTVW (307 aa)). Catalysis depends on charge relay system residues D184 and H224. 2 disulfides stabilise this stretch: C221/C253 and C321/C356. S384 (charge relay system) is an active-site residue. A C-terminal domain region spans residues 448–690 (GAGWQLFCRT…HLAQASQELQ (243 aa)). 3 disulfides stabilise this stretch: C455–C525, C475–C524, and C484–C507. N-linked (GlcNAc...) asparagine glycosylation occurs at N531. Disulfide bonds link C532-C599, C550-C598, C560-C586, C606-C677, C624-C676, and C633-C652. Phosphoserine is present on S686.

The protein belongs to the peptidase S8 family. In terms of assembly, monomer. Can self-associate to form dimers and higher multimers which may have increased LDLR degrading activity. The precursor protein but not the mature protein may form multimers. Interacts with APOB, VLDLR, LRP8/APOER2 and BACE1. The full-length immature form (pro-PCSK9) interacts with SCNN1A, SCNN1B and SCNN1G. The pro-PCSK9 form (via C-terminal domain) interacts with LDLR. Interacts (via the C-terminal domain) with ANXA2 (via repeat Annexin 1); the interaction inhibits the degradation of LDLR. Ca(2+) serves as cofactor. In terms of processing, cleavage by furin and PCSK5 generates a truncated inactive protein that is unable to induce LDLR degradation. Post-translationally, undergoes autocatalytic cleavage in the endoplasmic reticulum to release the propeptide from the N-terminus and the cleavage of the propeptide is strictly required for its maturation and activation. The cleaved propeptide however remains associated with the catalytic domain through non-covalent interactions, preventing potential substrates from accessing its active site. As a result, it is secreted from cells as a propeptide-containing, enzymatically inactive protein. Phosphorylation protects the propeptide against proteolysis.

It is found in the cytoplasm. It localises to the secreted. The protein localises to the endosome. The protein resides in the lysosome. Its subcellular location is the cell surface. It is found in the endoplasmic reticulum. It localises to the golgi apparatus. With respect to regulation, its proteolytic activity is autoinhibited by the non-covalent binding of the propeptide to the catalytic domain. Inhibited by EGTA. Crucial player in the regulation of plasma cholesterol homeostasis. Binds to low-density lipid receptor family members: low density lipoprotein receptor (LDLR), very low density lipoprotein receptor (VLDLR), apolipoprotein E receptor (LRP1/APOER) and apolipoprotein receptor 2 (LRP8/APOER2), and promotes their degradation in intracellular acidic compartments. Acts via a non-proteolytic mechanism to enhance the degradation of the hepatic LDLR through a clathrin LDLRAP1/ARH-mediated pathway. May prevent the recycling of LDLR from endosomes to the cell surface or direct it to lysosomes for degradation. Can induce ubiquitination of LDLR leading to its subsequent degradation. Inhibits intracellular degradation of APOB via the autophagosome/lysosome pathway in a LDLR-independent manner. Involved in the disposal of non-acetylated intermediates of BACE1 in the early secretory pathway. Inhibits epithelial Na(+) channel (ENaC)-mediated Na(+) absorption by reducing ENaC surface expression primarily by increasing its proteasomal degradation. Regulates neuronal apoptosis via modulation of LRP8/APOER2 levels and related anti-apoptotic signaling pathways. The chain is Proprotein convertase subtilisin/kexin type 9 (PCSK9) from Lagothrix lagotricha (Brown woolly monkey).